The following is a 97-amino-acid chain: Citrate lyase acyl carrier protein (97 aa).

Residue Ser-14 is modified to O-(phosphoribosyl dephospho-coenzyme A)serine.

This sequence belongs to the CitD family. Oligomer with a subunit composition of (alpha,beta,gamma)6.

It is found in the cytoplasm. Functionally, covalent carrier of the coenzyme of citrate lyase. The polypeptide is Citrate lyase acyl carrier protein (Rhodopseudomonas palustris (strain BisA53)).